Here is a 193-residue protein sequence, read N- to C-terminus: Potassium-transporting ATPase KdpC subunit (193 aa).

The chain crosses the membrane as a helical span at residues 14–34 (ITFTFLVLCGLVYPLIVTGIA).

Belongs to the KdpC family. The system is composed of three essential subunits: KdpA, KdpB and KdpC.

It is found in the cell membrane. In terms of biological role, part of the high-affinity ATP-driven potassium transport (or Kdp) system, which catalyzes the hydrolysis of ATP coupled with the electrogenic transport of potassium into the cytoplasm. This subunit acts as a catalytic chaperone that increases the ATP-binding affinity of the ATP-hydrolyzing subunit KdpB by the formation of a transient KdpB/KdpC/ATP ternary complex. This is Potassium-transporting ATPase KdpC subunit from Bacillus cereus (strain ATCC 14579 / DSM 31 / CCUG 7414 / JCM 2152 / NBRC 15305 / NCIMB 9373 / NCTC 2599 / NRRL B-3711).